Consider the following 514-residue polypeptide: Putative ankyrin repeat protein R863 (514 aa).

ANK repeat units follow at residues 45–74 (AKID…LKHP), 84–114 (KSLN…DINS), 115–144 (KKNR…DVRA), 146–174 (KDYA…NIKV), 176–204 (DNFA…NIRA), 205–234 (DNNY…DIRA), 236–264 (NNYA…NVKS), 266–294 (NDCA…DVRS), 295–324 (ENDY…NVRA), 325–354 (DNNY…NIRS), 356–384 (NDYA…NFKS), 385–414 (DYDC…DIRV), 415–444 (NNDY…DIRA), 446–474 (NDYA…NVKA), and 476–504 (NNYA…DVRS).

The polypeptide is Putative ankyrin repeat protein R863 (Acanthamoeba polyphaga mimivirus (APMV)).